The chain runs to 541 residues: Multidrug transporter protein MdtP (541 aa).

The next 14 membrane-spanning stretches (helical) occupy residues 14 to 34 (LLITGLIIAMFFSALDGTIVG), 40 to 60 (IVGDLGGLSMMTWLTTAYLLT), 79 to 99 (IVYVSGLIIFMAASALCGMAN), 112 to 132 (GIGGGIMMPMAMIVIGDLFTG), 141 to 161 (VFGAIYGLASVIGPQIGGWIV), 168 to 188 (WVFYINLPVGIIAVIFIARGL), 201 to 221 (IAGIFTMIVGVVSLLLALSFG), 229 to 249 (SWQILGLFALALIGIVSFIIV), 273 to 293 (LIGFFMSIGMFGAITFVPFFM), 307 to 327 (IMTPMMISMIITSIIGGQLVY), 329 to 349 (IGIKPQIITGMLVMAGGFLLL), 359 to 379 (LVATSFMAIIGLGMGLVMPIL), 401 to 420 (FFRSIGGTFGITMLGAVMNA), and 492 to 512 (LHSVFYTGLIFIAVGAVFTLF).

This sequence belongs to the major facilitator superfamily. EmrB family.

The protein resides in the cell membrane. Functionally, multidrug efflux transporter. Contributes to resistance to several antibiotics, including fusidic acid, novobiocin, streptomycin and actinomycin, possibly by pumping these structurally unrelated antibiotics out of cells. The sequence is that of Multidrug transporter protein MdtP from Bacillus subtilis (strain 168).